The chain runs to 133 residues: Ribosome-binding factor A (133 aa).

Belongs to the RbfA family. Monomer. Binds 30S ribosomal subunits, but not 50S ribosomal subunits or 70S ribosomes.

The protein resides in the cytoplasm. Functionally, one of several proteins that assist in the late maturation steps of the functional core of the 30S ribosomal subunit. Associates with free 30S ribosomal subunits (but not with 30S subunits that are part of 70S ribosomes or polysomes). Required for efficient processing of 16S rRNA. May interact with the 5'-terminal helix region of 16S rRNA. The protein is Ribosome-binding factor A of Enterobacter sp. (strain 638).